Consider the following 460-residue polypeptide: Bifunctional protein GlmU (460 aa).

The segment at 1-232 is pyrophosphorylase; it reads MALNVVILAA…AIEVEGANNR (232 aa). Residues 8–11, Lys22, Gln73, 78–79, 100–102, Gly137, Glu157, Asn172, and Asn230 contribute to the UDP-N-acetyl-alpha-D-glucosamine site; these read LAAG, GT, and YGD. Asp102 lines the Mg(2+) pocket. Asn230 contributes to the Mg(2+) binding site. A linker region spans residues 233 to 253; it reads VQLAQLERAYQAREAEKLMLA. The interval 254 to 460 is N-acetyltransferase; sequence GANLRDPSRI…GWQRPVKIKK (207 aa). Residues Arg336 and Lys354 each coordinate UDP-N-acetyl-alpha-D-glucosamine. Residue His366 is the Proton acceptor of the active site. UDP-N-acetyl-alpha-D-glucosamine is bound by residues Tyr369 and Asn380. Acetyl-CoA-binding positions include Ala383, 389–390, Ser408, Ala426, and Arg443; that span reads NY.

The protein in the N-terminal section; belongs to the N-acetylglucosamine-1-phosphate uridyltransferase family. It in the C-terminal section; belongs to the transferase hexapeptide repeat family. As to quaternary structure, homotrimer. Requires Mg(2+) as cofactor.

It localises to the cytoplasm. The catalysed reaction is alpha-D-glucosamine 1-phosphate + acetyl-CoA = N-acetyl-alpha-D-glucosamine 1-phosphate + CoA + H(+). It carries out the reaction N-acetyl-alpha-D-glucosamine 1-phosphate + UTP + H(+) = UDP-N-acetyl-alpha-D-glucosamine + diphosphate. It functions in the pathway nucleotide-sugar biosynthesis; UDP-N-acetyl-alpha-D-glucosamine biosynthesis; N-acetyl-alpha-D-glucosamine 1-phosphate from alpha-D-glucosamine 6-phosphate (route II): step 2/2. It participates in nucleotide-sugar biosynthesis; UDP-N-acetyl-alpha-D-glucosamine biosynthesis; UDP-N-acetyl-alpha-D-glucosamine from N-acetyl-alpha-D-glucosamine 1-phosphate: step 1/1. The protein operates within bacterial outer membrane biogenesis; LPS lipid A biosynthesis. Its function is as follows. Catalyzes the last two sequential reactions in the de novo biosynthetic pathway for UDP-N-acetylglucosamine (UDP-GlcNAc). The C-terminal domain catalyzes the transfer of acetyl group from acetyl coenzyme A to glucosamine-1-phosphate (GlcN-1-P) to produce N-acetylglucosamine-1-phosphate (GlcNAc-1-P), which is converted into UDP-GlcNAc by the transfer of uridine 5-monophosphate (from uridine 5-triphosphate), a reaction catalyzed by the N-terminal domain. The sequence is that of Bifunctional protein GlmU from Shewanella baltica (strain OS155 / ATCC BAA-1091).